Here is a 21-residue protein sequence, read N- to C-terminus: Fibrinogen beta chain (21 aa).

Q1 is subject to Pyrrolidone carboxylic acid. Y6 carries the post-translational modification Sulfotyrosine.

As to quaternary structure, heterohexamer; disulfide linked. Contains 2 sets of 3 non-identical chains (alpha, beta and gamma). The 2 heterotrimers are in head to head conformation with the N-termini in a small central domain. In terms of processing, conversion of fibrinogen to fibrin is triggered by thrombin, which cleaves fibrinopeptides A and B from alpha and beta chains, and thus exposes the N-terminal polymerization sites responsible for the formation of the soft clot.

The protein localises to the secreted. In terms of biological role, cleaved by the protease thrombin to yield monomers which, together with fibrinogen alpha (FGA) and fibrinogen gamma (FGG), polymerize to form an insoluble fibrin matrix. Fibrin has a major function in hemostasis as one of the primary components of blood clots. In addition, functions during the early stages of wound repair to stabilize the lesion and guide cell migration during re-epithelialization. Was originally thought to be essential for platelet aggregation, based on in vitro studies using anticoagulated blood. However subsequent studies have shown that it is not absolutely required for thrombus formation in vivo. Enhances expression of SELP in activated platelets. Maternal fibrinogen is essential for successful pregnancy. Fibrin deposition is also associated with infection, where it protects against IFNG-mediated hemorrhage. May also facilitate the antibacterial immune response via both innate and T-cell mediated pathways. This is Fibrinogen beta chain (FGB) from Rangifer tarandus (Reindeer).